We begin with the raw amino-acid sequence, 394 residues long: Acetate kinase (394 aa).

Asn10 serves as a coordination point for Mg(2+). Lys17 provides a ligand contact to ATP. Substrate is bound at residue Arg87. Asp144 serves as the catalytic Proton donor/acceptor. ATP is bound by residues 204–208, 279–281, and 327–331; these read HLGNG, DMR, and GIGEN. Glu381 is a Mg(2+) binding site.

Belongs to the acetokinase family. Homodimer. Requires Mg(2+) as cofactor. It depends on Mn(2+) as a cofactor.

It localises to the cytoplasm. The enzyme catalyses acetate + ATP = acetyl phosphate + ADP. The protein operates within metabolic intermediate biosynthesis; acetyl-CoA biosynthesis; acetyl-CoA from acetate: step 1/2. In terms of biological role, catalyzes the formation of acetyl phosphate from acetate and ATP. Can also catalyze the reverse reaction. The chain is Acetate kinase from Ectopseudomonas mendocina (strain ymp) (Pseudomonas mendocina).